Here is a 298-residue protein sequence, read N- to C-terminus: Protoheme IX farnesyltransferase (298 aa).

8 helical membrane passes run 24–44 (VVSLIVFTAVIGMFLAVPAWP), 46–66 (WTTIWAGTLGIGLVASAAAAF), 97–117 (LVFAGVLGGSGLLLLHTVVNP), 118–138 (LTMWLTLATFVGYAVIYTVLL), 146–166 (IVIGGASGAMPPVLGWAAATG), 172–192 (ALLLFLIIFAWTPPHFWALAL), 231–251 (LLPVGTGMAGALYLVGAVLLG), and 278–298 (IWYLAALFAIMLLDHYFPIPV).

It belongs to the UbiA prenyltransferase family. Protoheme IX farnesyltransferase subfamily.

It is found in the cell inner membrane. The enzyme catalyses heme b + (2E,6E)-farnesyl diphosphate + H2O = Fe(II)-heme o + diphosphate. The protein operates within porphyrin-containing compound metabolism; heme O biosynthesis; heme O from protoheme: step 1/1. Converts heme B (protoheme IX) to heme O by substitution of the vinyl group on carbon 2 of heme B porphyrin ring with a hydroxyethyl farnesyl side group. This chain is Protoheme IX farnesyltransferase, found in Thiobacillus denitrificans (strain ATCC 25259 / T1).